We begin with the raw amino-acid sequence, 145 residues long: Large ribosomal subunit protein uL13 (145 aa).

Belongs to the universal ribosomal protein uL13 family. In terms of assembly, part of the 50S ribosomal subunit.

Its function is as follows. This protein is one of the early assembly proteins of the 50S ribosomal subunit, although it is not seen to bind rRNA by itself. It is important during the early stages of 50S assembly. The chain is Large ribosomal subunit protein uL13 from Staphylococcus carnosus (strain TM300).